Here is a 334-residue protein sequence, read N- to C-terminus: MTKIFADSSINPLSVAPMMDHTDRHFRYFLRQLTRHTLLYTEMITAQAILHGDRQRLLNFSPEEKPVALQLGGDDPQLLAECARIGQDWGYDEINLNVGCPSDRVQSGNFGACLMAQPDLVAQCVSAMQKAVEIPVTVKHRIGIDHRDSYEDLVHFVEIVANAGCQRFTVHARKAWLQGLSPKENRTIPPLRYEDVYQLKKDFPQLLIEINGGITQTEQIQQHLSHVDAVMVGRAAYENPYLFATVDRDIYHKTNLVPSRAEIIERMLPYVEERLRHGDRLNQITRHLLSLFNGQPRAKFWRRTLSDSTLLASAGPELLQTALQAQKFPGVLVA.

Residues 17–19 (PMM) and glutamine 70 each bind FMN. The active-site Proton donor is cysteine 100. FMN is bound by residues lysine 139, histidine 171, 211–213 (NGG), and 233–234 (GR).

Belongs to the Dus family. DusA subfamily. FMN is required as a cofactor.

The enzyme catalyses 5,6-dihydrouridine(20) in tRNA + NADP(+) = uridine(20) in tRNA + NADPH + H(+). It catalyses the reaction 5,6-dihydrouridine(20) in tRNA + NAD(+) = uridine(20) in tRNA + NADH + H(+). The catalysed reaction is 5,6-dihydrouridine(20a) in tRNA + NADP(+) = uridine(20a) in tRNA + NADPH + H(+). It carries out the reaction 5,6-dihydrouridine(20a) in tRNA + NAD(+) = uridine(20a) in tRNA + NADH + H(+). Functionally, catalyzes the synthesis of 5,6-dihydrouridine (D), a modified base found in the D-loop of most tRNAs, via the reduction of the C5-C6 double bond in target uridines. Specifically modifies U20 and U20a in tRNAs. The sequence is that of tRNA-dihydrouridine(20/20a) synthase (dus2) from Synechocystis sp. (strain ATCC 27184 / PCC 6803 / Kazusa).